The primary structure comprises 427 residues: Glutamate-1-semialdehyde 2,1-aminomutase (427 aa).

An N6-(pyridoxal phosphate)lysine modification is found at K265.

It belongs to the class-III pyridoxal-phosphate-dependent aminotransferase family. HemL subfamily. As to quaternary structure, homodimer. Pyridoxal 5'-phosphate serves as cofactor.

It is found in the cytoplasm. It catalyses the reaction (S)-4-amino-5-oxopentanoate = 5-aminolevulinate. Its pathway is porphyrin-containing compound metabolism; protoporphyrin-IX biosynthesis; 5-aminolevulinate from L-glutamyl-tRNA(Glu): step 2/2. The sequence is that of Glutamate-1-semialdehyde 2,1-aminomutase from Pseudomonas fluorescens (strain SBW25).